A 298-amino-acid polypeptide reads, in one-letter code: N-acetylmuramic acid 6-phosphate etherase (298 aa).

An SIS domain is found at 55-218 (IHAQVSGGGR…STGLMIKSGK (164 aa)). Glu83 functions as the Proton donor in the catalytic mechanism. Residue Glu114 is part of the active site.

Belongs to the GCKR-like family. MurNAc-6-P etherase subfamily. Homodimer.

The catalysed reaction is N-acetyl-D-muramate 6-phosphate + H2O = N-acetyl-D-glucosamine 6-phosphate + (R)-lactate. The protein operates within amino-sugar metabolism; 1,6-anhydro-N-acetylmuramate degradation. Its pathway is amino-sugar metabolism; N-acetylmuramate degradation. It participates in cell wall biogenesis; peptidoglycan recycling. Functionally, specifically catalyzes the cleavage of the D-lactyl ether substituent of MurNAc 6-phosphate, producing GlcNAc 6-phosphate and D-lactate. Together with AnmK, is also required for the utilization of anhydro-N-acetylmuramic acid (anhMurNAc) either imported from the medium or derived from its own cell wall murein, and thus plays a role in cell wall recycling. This Escherichia coli O17:K52:H18 (strain UMN026 / ExPEC) protein is N-acetylmuramic acid 6-phosphate etherase.